Here is a 160-residue protein sequence, read N- to C-terminus: 6,7-dimethyl-8-ribityllumazine synthase (160 aa).

Residues Phe-23, 61-63 (SFE), and 85-87 (AVI) contribute to the 5-amino-6-(D-ribitylamino)uracil site. 90–91 (DT) provides a ligand contact to (2S)-2-hydroxy-3-oxobutyl phosphate. Residue His-93 is the Proton donor of the active site. 5-amino-6-(D-ribitylamino)uracil is bound at residue Phe-118. Residue Arg-132 coordinates (2S)-2-hydroxy-3-oxobutyl phosphate.

Belongs to the DMRL synthase family.

It catalyses the reaction (2S)-2-hydroxy-3-oxobutyl phosphate + 5-amino-6-(D-ribitylamino)uracil = 6,7-dimethyl-8-(1-D-ribityl)lumazine + phosphate + 2 H2O + H(+). The protein operates within cofactor biosynthesis; riboflavin biosynthesis; riboflavin from 2-hydroxy-3-oxobutyl phosphate and 5-amino-6-(D-ribitylamino)uracil: step 1/2. In terms of biological role, catalyzes the formation of 6,7-dimethyl-8-ribityllumazine by condensation of 5-amino-6-(D-ribitylamino)uracil with 3,4-dihydroxy-2-butanone 4-phosphate. This is the penultimate step in the biosynthesis of riboflavin. The chain is 6,7-dimethyl-8-ribityllumazine synthase from Synechococcus sp. (strain CC9311).